A 213-amino-acid chain; its full sequence is Protein RCR1 (213 aa).

The Lumenal segment spans residues 1-39; that stretch reads MGLISYENEAINEVKKADNHHVSKFVTSYYGPSSSSWQS. A helical transmembrane segment spans residues 40–62; sequence GIWILFVLFVAAVILIILFTFVA. Over 63-213 the chain is Cytoplasmic; it reads NRRRRRMGRA…PERAKVNARS (151 aa). A PY motif motif is present at residues 104–107; sequence VPEY. Residues 190 to 213 form a disordered region; the sequence is ERLPGGTTTQEINPPERAKVNARS. Over residues 203-213 the composition is skewed to basic and acidic residues; it reads PPERAKVNARS.

As to quaternary structure, interacts with PMT4 and WW domain of RSP5.

Its subcellular location is the endoplasmic reticulum membrane. Functionally, regulates chitin deposition in the cell wall. The sequence is that of Protein RCR1 (RCR1) from Saccharomyces cerevisiae (strain ATCC 204508 / S288c) (Baker's yeast).